The sequence spans 116 residues: Ribosome-binding factor A (116 aa).

Belongs to the RbfA family. As to quaternary structure, monomer. Binds 30S ribosomal subunits, but not 50S ribosomal subunits or 70S ribosomes.

The protein localises to the cytoplasm. Functionally, one of several proteins that assist in the late maturation steps of the functional core of the 30S ribosomal subunit. Associates with free 30S ribosomal subunits (but not with 30S subunits that are part of 70S ribosomes or polysomes). Required for efficient processing of 16S rRNA. May interact with the 5'-terminal helix region of 16S rRNA. This is Ribosome-binding factor A from Streptococcus agalactiae.